The following is a 263-amino-acid chain: Shikimate dehydrogenase (NADP(+)) (263 aa).

Shikimate contacts are provided by residues S16 to S18 and T65. Residue K69 is the Proton acceptor of the active site. Shikimate contacts are provided by N90 and D105. Residues G125–S129 and L208 each bind NADP(+). Y210 is a binding site for shikimate. G230 lines the NADP(+) pocket.

It belongs to the shikimate dehydrogenase family. As to quaternary structure, homodimer.

It carries out the reaction shikimate + NADP(+) = 3-dehydroshikimate + NADPH + H(+). It functions in the pathway metabolic intermediate biosynthesis; chorismate biosynthesis; chorismate from D-erythrose 4-phosphate and phosphoenolpyruvate: step 4/7. Functionally, involved in the biosynthesis of the chorismate, which leads to the biosynthesis of aromatic amino acids. Catalyzes the reversible NADPH linked reduction of 3-dehydroshikimate (DHSA) to yield shikimate (SA). The protein is Shikimate dehydrogenase (NADP(+)) of Helicobacter pylori (strain G27).